The sequence spans 404 residues: Cysteine desulfurase IscS (404 aa).

Pyridoxal 5'-phosphate is bound by residues 75 to 76 (AT), Asn-155, Gln-183, and 203 to 205 (SSH). Lys-206 carries the post-translational modification N6-(pyridoxal phosphate)lysine. Thr-243 provides a ligand contact to pyridoxal 5'-phosphate. The active-site Cysteine persulfide intermediate is the Cys-328. Position 328 (Cys-328) interacts with [2Fe-2S] cluster.

This sequence belongs to the class-V pyridoxal-phosphate-dependent aminotransferase family. NifS/IscS subfamily. In terms of assembly, homodimer. Forms a heterotetramer with IscU, interacts with other sulfur acceptors. Pyridoxal 5'-phosphate is required as a cofactor.

Its subcellular location is the cytoplasm. It carries out the reaction (sulfur carrier)-H + L-cysteine = (sulfur carrier)-SH + L-alanine. Its pathway is cofactor biosynthesis; iron-sulfur cluster biosynthesis. Functionally, master enzyme that delivers sulfur to a number of partners involved in Fe-S cluster assembly, tRNA modification or cofactor biosynthesis. Catalyzes the removal of elemental sulfur atoms from cysteine to produce alanine. Functions as a sulfur delivery protein for Fe-S cluster synthesis onto IscU, an Fe-S scaffold assembly protein, as well as other S acceptor proteins. The chain is Cysteine desulfurase IscS from Haemophilus influenzae (strain PittGG).